Consider the following 1358-residue polypeptide: Probable aldehyde oxidase 1 (1358 aa).

The 88-residue stretch at 4–91 (AAAVVAVNGE…HCAVTTSEGI (88 aa)) folds into the 2Fe-2S ferredoxin-type domain. The [2Fe-2S] cluster site is built by Cys-43, Cys-48, Cys-51, and Cys-73. In terms of domain architecture, FAD-binding PCMH-type spans 236–418 (AVTGDGCWFH…ISISIPDWCS (183 aa)). Residues 540–567 (KPENANNVPNGSCTTNGTTNGSAESTVD) are disordered. Residues 549–561 (NGSCTTNGTTNGS) are compositionally biased toward low complexity.

The protein belongs to the xanthine dehydrogenase family. In terms of assembly, aldehyde oxidases (AO) are homodimers and heterodimers of AO subunits. [2Fe-2S] cluster serves as cofactor. Requires FAD as cofactor. Mo-molybdopterin is required as a cofactor.

It catalyses the reaction an aldehyde + O2 + H2O = a carboxylate + H2O2 + H(+). The protein is Probable aldehyde oxidase 1 of Oryza sativa subsp. japonica (Rice).